Reading from the N-terminus, the 110-residue chain is Nitrogenase-stabilizing/protective protein NifW (110 aa).

Belongs to the NifW family. As to quaternary structure, homotrimer; associates with NifD.

Its function is as follows. May protect the nitrogenase Fe-Mo protein from oxidative damage. In Acidithiobacillus ferrooxidans (strain ATCC 23270 / DSM 14882 / CIP 104768 / NCIMB 8455) (Ferrobacillus ferrooxidans (strain ATCC 23270)), this protein is Nitrogenase-stabilizing/protective protein NifW.